The primary structure comprises 199 residues: Inner membrane protein E199L (199 aa).

N-linked (GlcNAc...) asparagine; by host glycosylation occurs at Asn-131. The chain crosses the membrane as a helical span at residues 150–170 (INVMNHPFLTLILIILILVII).

Belongs to the asfivirus E199L family. In terms of assembly, interacts with host PYCR2; this interaction results in autophagy activation.

The protein localises to the virion membrane. It localises to the host membrane. In terms of biological role, essential for viral fusion with host endosomal membrane and core release. Not required for virus morphogenesis and egress. Induces complete autophagy through the interaction with and down-regulation of host PYCR2. The chain is Inner membrane protein E199L from African swine fever virus (isolate Pig/Kenya/KEN-50/1950) (ASFV).